A 144-amino-acid chain; its full sequence is Large ribosomal subunit protein uL15 (144 aa).

Positions 1 to 18 are enriched in basic and acidic residues; the sequence is MRLNDLHPAEGSRPEGKR. The segment at 1–58 is disordered; sequence MRLNDLHPAEGSRPEGKRVGRGIGSGLGKTGGRGHKGQKSRSGGSVKPGFEGGQMPLQ. Positions 21 to 31 are enriched in gly residues; it reads RGIGSGLGKTG.

Belongs to the universal ribosomal protein uL15 family. As to quaternary structure, part of the 50S ribosomal subunit.

Functionally, binds to the 23S rRNA. This is Large ribosomal subunit protein uL15 from Alcanivorax borkumensis (strain ATCC 700651 / DSM 11573 / NCIMB 13689 / SK2).